A 167-amino-acid polypeptide reads, in one-letter code: MSPQTHTLSVLVEAKPGVLARVAALFSRRGFNIESLAVGATEQKDMSRMTIVVSAEETPLEQITKQLNKLINVIKIVELEDGNSVSRELALIKVRADAGTRSQVIEAVNLFRAKVIDVSPEALTIEATGDRGKIEALLRVLEPSVSVRSSNREWCRCPGPRGIGTAK.

An ACT domain is found at 7–81 (TLSVLVEAKP…NVIKIVELED (75 aa)).

Belongs to the acetolactate synthase small subunit family. Dimer of large and small chains.

The catalysed reaction is 2 pyruvate + H(+) = (2S)-2-acetolactate + CO2. The protein operates within amino-acid biosynthesis; L-isoleucine biosynthesis; L-isoleucine from 2-oxobutanoate: step 1/4. Its pathway is amino-acid biosynthesis; L-valine biosynthesis; L-valine from pyruvate: step 1/4. This is Acetolactate synthase small subunit (ilvH) from Mycobacterium avium.